The sequence spans 399 residues: 1-deoxy-D-xylulose 5-phosphate reductoisomerase (399 aa).

Residues T10, G11, S12, I13, and N124 each contribute to the NADPH site. K125 contributes to the 1-deoxy-D-xylulose 5-phosphate binding site. E126 provides a ligand contact to NADPH. D150 is a Mn(2+) binding site. 1-deoxy-D-xylulose 5-phosphate-binding residues include S151, E152, S186, and H209. E152 contributes to the Mn(2+) binding site. G215 lines the NADPH pocket. Residues S222, N227, K228, and E231 each coordinate 1-deoxy-D-xylulose 5-phosphate. A Mn(2+)-binding site is contributed by E231.

It belongs to the DXR family. The cofactor is Mg(2+). It depends on Mn(2+) as a cofactor.

It catalyses the reaction 2-C-methyl-D-erythritol 4-phosphate + NADP(+) = 1-deoxy-D-xylulose 5-phosphate + NADPH + H(+). The protein operates within isoprenoid biosynthesis; isopentenyl diphosphate biosynthesis via DXP pathway; isopentenyl diphosphate from 1-deoxy-D-xylulose 5-phosphate: step 1/6. Functionally, catalyzes the NADPH-dependent rearrangement and reduction of 1-deoxy-D-xylulose-5-phosphate (DXP) to 2-C-methyl-D-erythritol 4-phosphate (MEP). This Psychromonas ingrahamii (strain DSM 17664 / CCUG 51855 / 37) protein is 1-deoxy-D-xylulose 5-phosphate reductoisomerase.